The following is a 347-amino-acid chain: uncharacterized protein (347 aa).

Residues 1 to 21 form the signal peptide; it reads MNKKSLNIVVMFGILMILAFS.

Belongs to the bacterial solute-binding protein 1 family. WtpA subfamily.

This is an uncharacterized protein from Methanococcus maripaludis (strain C5 / ATCC BAA-1333).